The following is a 475-amino-acid chain: Sulfate adenylyltransferase subunit 1 (475 aa).

The tr-type G domain occupies 25 to 239 (KSLLRFLTCG…EVLETVEIQR (215 aa)). The tract at residues 34–41 (GSVDDGKS) is G1. A GTP-binding site is contributed by 34–41 (GSVDDGKS). Residues 92–96 (GITID) form a G2 region. Residues 113–116 (DTPG) are G3. Residues 113 to 117 (DTPGH) and 168 to 171 (NKMD) contribute to the GTP site. The tract at residues 168–171 (NKMD) is G4. The segment at 206 to 208 (SAL) is G5.

This sequence belongs to the TRAFAC class translation factor GTPase superfamily. Classic translation factor GTPase family. CysN/NodQ subfamily. As to quaternary structure, heterodimer composed of CysD, the smaller subunit, and CysN.

The catalysed reaction is sulfate + ATP + H(+) = adenosine 5'-phosphosulfate + diphosphate. It functions in the pathway sulfur metabolism; hydrogen sulfide biosynthesis; sulfite from sulfate: step 1/3. In terms of biological role, with CysD forms the ATP sulfurylase (ATPS) that catalyzes the adenylation of sulfate producing adenosine 5'-phosphosulfate (APS) and diphosphate, the first enzymatic step in sulfur assimilation pathway. APS synthesis involves the formation of a high-energy phosphoric-sulfuric acid anhydride bond driven by GTP hydrolysis by CysN coupled to ATP hydrolysis by CysD. The protein is Sulfate adenylyltransferase subunit 1 of Shigella flexneri.